Consider the following 37-residue polypeptide: Photosystem II reaction center protein T (37 aa).

The helical transmembrane segment at 3–23 (ALVYTFLLVSTLGILFFAIFF) threads the bilayer.

This sequence belongs to the PsbT family. As to quaternary structure, PSII is composed of 1 copy each of membrane proteins PsbA, PsbB, PsbC, PsbD, PsbE, PsbF, PsbH, PsbI, PsbJ, PsbK, PsbL, PsbM, PsbT, PsbY, PsbZ, Psb30/Ycf12, at least 3 peripheral proteins of the oxygen-evolving complex and a large number of cofactors. It forms dimeric complexes.

The protein resides in the plastid. It is found in the chloroplast thylakoid membrane. Found at the monomer-monomer interface of the photosystem II (PS II) dimer, plays a role in assembly and dimerization of PSII. PSII is a light-driven water plastoquinone oxidoreductase, using light energy to abstract electrons from H(2)O, generating a proton gradient subsequently used for ATP formation. This is Photosystem II reaction center protein T from Ephedra sinica (Chinese ephedra).